A 461-amino-acid chain; its full sequence is Putative aldehyde dehydrogenase FUS7 (461 aa).

NAD(+) is bound at residue 220–225; that stretch reads GSTATG. Residues Glu-242 and Cys-276 contribute to the active site.

The protein belongs to the aldehyde dehydrogenase family.

The enzyme catalyses an aldehyde + NAD(+) + H2O = a carboxylate + NADH + 2 H(+). Functionally, putative aldehyde dehydrogenase; part of the gene cluster that mediates the biosynthesis of the mycotoxin fusarin C. Within the cluster, FUS1, FUS2, FUS8 and FUS9 are sufficient for fusarin production. The other FUS cluster members are not essential for fusarin C biosynthesis. This Gibberella moniliformis (strain M3125 / FGSC 7600) (Maize ear and stalk rot fungus) protein is Putative aldehyde dehydrogenase FUS7.